The following is a 124-amino-acid chain: Protein MGF 100-1R (124 aa).

This sequence belongs to the asfivirus MGF 100 family.

Its function is as follows. Plays a role in virus cell tropism, and may be required for efficient virus replication in macrophages. In Ornithodoros (relapsing fever ticks), this protein is Protein MGF 100-1R.